Here is a 353-residue protein sequence, read N- to C-terminus: Photosystem II protein D1 (353 aa).

At Thr-2 the chain carries N-acetylthreonine. Residue Thr-2 is modified to Phosphothreonine. Transmembrane regions (helical) follow at residues 29–46 (YIGWFGVLMIPTLLTATS), 118–133 (HFLLGVACYMGREWEL), and 142–156 (WIAVAYSAPVAAATA). His-118 lines the chlorophyll a pocket. Residue Tyr-126 participates in pheophytin a binding. [CaMn4O5] cluster is bound by residues Asp-170 and Glu-189. The helical transmembrane segment at 197 to 218 (FHMLGVAGVFGGSLFSAMHGSL) threads the bilayer. His-198 lines the chlorophyll a pocket. A quinone-binding positions include His-215 and 264–265 (SF). Residue His-215 participates in Fe cation binding. His-272 is a binding site for Fe cation. A helical membrane pass occupies residues 274 to 288 (FLAAWPVVGIWFTAL). His-332, Glu-333, Asp-342, and Ala-344 together coordinate [CaMn4O5] cluster. The propeptide occupies 345–353 (SIEAPLVNG).

This sequence belongs to the reaction center PufL/M/PsbA/D family. PSII is composed of 1 copy each of membrane proteins PsbA, PsbB, PsbC, PsbD, PsbE, PsbF, PsbH, PsbI, PsbJ, PsbK, PsbL, PsbM, PsbT, PsbX, PsbY, PsbZ, Psb30/Ycf12, at least 3 peripheral proteins of the oxygen-evolving complex and a large number of cofactors. It forms dimeric complexes. It depends on The D1/D2 heterodimer binds P680, chlorophylls that are the primary electron donor of PSII, and subsequent electron acceptors. It shares a non-heme iron and each subunit binds pheophytin, quinone, additional chlorophylls, carotenoids and lipids. D1 provides most of the ligands for the Mn4-Ca-O5 cluster of the oxygen-evolving complex (OEC). There is also a Cl(-1) ion associated with D1 and D2, which is required for oxygen evolution. The PSII complex binds additional chlorophylls, carotenoids and specific lipids. as a cofactor. In terms of processing, tyr-161 forms a radical intermediate that is referred to as redox-active TyrZ, YZ or Y-Z. Post-translationally, C-terminally processed by CTPA; processing is essential to allow assembly of the oxygen-evolving complex and thus photosynthetic growth.

It localises to the plastid. It is found in the chloroplast thylakoid membrane. The catalysed reaction is 2 a plastoquinone + 4 hnu + 2 H2O = 2 a plastoquinol + O2. Functionally, photosystem II (PSII) is a light-driven water:plastoquinone oxidoreductase that uses light energy to abstract electrons from H(2)O, generating O(2) and a proton gradient subsequently used for ATP formation. It consists of a core antenna complex that captures photons, and an electron transfer chain that converts photonic excitation into a charge separation. The D1/D2 (PsbA/PsbD) reaction center heterodimer binds P680, the primary electron donor of PSII as well as several subsequent electron acceptors. The sequence is that of Photosystem II protein D1 from Psilotum nudum (Whisk fern).